The primary structure comprises 155 residues: VEHLTEDEKSQFRAAFDIFVADAKDGTISSKELGKVMKMLGQNPTEKDLQEMIEEVDIDGSGTIDFEEFCLMMYRQMQAQEEAKIPEREEKELSEAFRLFDLDGDGIGDELKAALDGTGENVETWEVDEMMADGDKNHDSQIDYEEWVTMMKFVQ.

N-acetylvaline is present on Val-1. EF-hand domains follow at residues 7 to 43, 44 to 79, 88 to 121, and 122 to 155; these read DEKSQFRAAFDIFVADAKDGTISSKELGKVMKMLGQN, PTEKDLQEMIEEVDIDGSGTIDFEEFCLMMYRQMQA, REEKELSEAFRLFDLDGDGIGDELKAALDGTGEN, and VETWEVDEMMADGDKNHDSQIDYEEWVTMMKFVQ. Ca(2+)-binding residues include Asp-57, Asp-59, Ser-61, Thr-63, and Glu-68. Positions 135, 137, 139, 141, and 146 each coordinate Ca(2+).

It belongs to the troponin C family.

In terms of biological role, troponin is the central regulatory protein of muscle contraction. Tn consists of three components: Tn-I which is the inhibitor of actomyosin ATPase, Tn-T which contains the binding site for tropomyosin and Tn-C. The binding of calcium to Tn-C abolishes the inhibitory action of Tn on actin filaments. The sequence is that of Troponin C, body wall muscle from Halocynthia roretzi (Sea squirt).